The chain runs to 1671 residues: DENN domain-containing protein Crag (1671 aa).

An MABP domain is found at 39–195 (IEPITDIGVY…DVYLCYKKSM (157 aa)). Positions 187–364 (VYLCYKKSMY…DEVPFPAPSI (178 aa)) constitute a uDENN domain. The cDENN domain maps to 385–521 (PLPRSGAGFH…AARLLRQTLT (137 aa)). Residues 523–632 (LENAKPISYD…ERSFVSDGDH (110 aa)) enclose the dDENN domain. Disordered stretches follow at residues 997 to 1160 (QQQQ…PVAS), 1245 to 1311 (ANST…RLSE), and 1415 to 1435 (VEESEQSDPLQDGKEQIANGN). 2 stretches are compositionally biased toward acidic residues: residues 1011–1023 (GDDDDEDEDEDEY) and 1050–1061 (YEADEEDEDEVD). Polar residues predominate over residues 1072–1089 (RVQSPTKISPRTPVTQND). Residues 1100–1119 (AASATPTQETQQEQQHSQSQ) show a composition bias toward low complexity. Residues 1136–1147 (RSATFDESTQIG) are compositionally biased toward polar residues. A compositionally biased stretch (basic residues) spans 1254 to 1277 (NGHHPHGLHHGHHHPHHHHHHHSQ). Over residues 1281 to 1301 (AEQEEHDAAVHEEGKLRRVSS) the composition is skewed to basic and acidic residues.

As to quaternary structure, interacts with Cam. Interacts with Rab10. Interacts (via the DENN domains) with Rab11. In terms of tissue distribution, expressed in the adult head and body.

Its subcellular location is the cytoplasm. The protein localises to the cell cortex. It is found in the early endosome. It localises to the recycling endosome. The protein resides in the cytoplasmic granule. In terms of biological role, calmodulin-binding protein that acts as a guanine exchange factor for Rab10 and Rab11. Essential for maintenance of adult photoreceptor cells. Upon light stimulation, required for trafficking of newly synthesized ninaE (Rh1) from the trans-Golgi network to rhabdomere membranes via Rab11-dependent vesicular transport. During egg development, essential for establishing and maintaining epithelial cell polarity by regulating the correct polarized deposition of basal membrane (BM) proteins in follicular epithelial (FE) cells. Functions by targeting Rab10 to the basal cytoplasm, where it restricts the secretion of BM proteins such as trol/Pcan and vkg/Coll IV to the basal surface. Appears to be involved in regulating the levels and distribution of the guanine nucleotide exchange factor strat, however the two proteins appear to have independent roles in regulating polarized BM protein secretion in the FE. In Drosophila melanogaster (Fruit fly), this protein is DENN domain-containing protein Crag.